Consider the following 278-residue polypeptide: Tropomyosin A (278 aa).

Residues 1–270 (IMMAMKLEKE…YRAISGELDT (270 aa)) adopt a coiled-coil conformation. The segment at 92–134 (DFEQSSGRLTETSTKLDDASKAAEESERNRKTLETRSISDDER) is disordered. The segment covering 95–104 (QSSGRLTETS) has biased composition (polar residues). A compositionally biased stretch (basic and acidic residues) spans 105–134 (TKLDDASKAAEESERNRKTLETRSISDDER).

Belongs to the tropomyosin family. As to quaternary structure, homodimer.

Tropomyosin, in association with the troponin complex, plays a central role in the calcium dependent regulation of muscle contraction. This chain is Tropomyosin A, found in Echinococcus granulosus (Hydatid tapeworm).